Reading from the N-terminus, the 219-residue chain is Ras-related protein Rab-3B (219 aa).

N-acetylalanine is present on Ala-2. Positions 31, 32, 33, 34, 35, 36, 37, 49, and 53 each coordinate GTP. Thr-36 lines the Mg(2+) pocket. A Switch 1 motif is present at residues 45–58 (DTFTPAFVSTVGID). Thr-54 and Asp-77 together coordinate Mg(2+). The Switch 2 motif lies at 78-96 (TAGQERYRTITTAYYRGAM). Position 80 (Gly-80) interacts with GTP. Thr-86 is modified (phosphothreonine; by LRRK2). GTP is bound by residues Asn-135, Lys-136, Asp-138, Ala-166, and Lys-167. Residues Ser-188 and Ser-190 each carry the phosphoserine modification. 2 S-geranylgeranyl cysteine lipidation sites follow: Cys-217 and Cys-219. Position 219 is a cysteine methyl ester (Cys-219).

The protein belongs to the small GTPase superfamily. Rab family. Interacts with RIMS1, RIMS2, RPH3A and RPH3AL. The GTP-bound form interacts with GAS8/DRC4 (via coiled-coil domains). Interacts with GDI2, CHM and CHML; phosphorylation at Thr-86 disrupts these interactions. Interacts with MADD (via uDENN domain); the GTP-bound form is preferred for interaction. Mg(2+) serves as cofactor. Phosphorylation of Thr-86 in the switch II region by LRRK2 prevents the association of RAB regulatory proteins, including CHM, CHML and RAB GDP dissociation inhibitor GDI2. As to expression, abundantly expressed in testis, lung and brain.

The protein resides in the cell membrane. It is found in the golgi apparatus. The catalysed reaction is GTP + H2O = GDP + phosphate + H(+). With respect to regulation, regulated by guanine nucleotide exchange factors (GEFs) which promote the exchange of bound GDP for free GTP. Regulated by GTPase activating proteins (GAPs) which increase the GTP hydrolysis activity. Inhibited by GDP dissociation inhibitors (GDIs) which prevent Rab-GDP dissociation. In terms of biological role, the small GTPases Rab are key regulators of intracellular membrane trafficking, from the formation of transport vesicles to their fusion with membranes. Rabs cycle between an inactive GDP-bound form and an active GTP-bound form that is able to recruit to membranes different sets of downstream effectors directly responsible for vesicle formation, movement, tethering and fusion. The chain is Ras-related protein Rab-3B from Mus musculus (Mouse).